A 256-amino-acid polypeptide reads, in one-letter code: 5-oxoprolinase subunit A (256 aa).

Belongs to the LamB/PxpA family. In terms of assembly, forms a complex composed of PxpA, PxpB and PxpC.

The catalysed reaction is 5-oxo-L-proline + ATP + 2 H2O = L-glutamate + ADP + phosphate + H(+). Functionally, catalyzes the cleavage of 5-oxoproline to form L-glutamate coupled to the hydrolysis of ATP to ADP and inorganic phosphate. The protein is 5-oxoprolinase subunit A of Cutibacterium acnes (strain DSM 16379 / KPA171202) (Propionibacterium acnes).